The primary structure comprises 481 residues: MITIEQLLDILKKDHNFREVLDADEYHYHYQGFSFERLSYDSRQVDGKTLFFAKGATFKADYLKEAITNGLQLYISEVDYELGIPVVLVTDIKKAMSLIAMAFYGNPQEKLKLLAFTGTKGKTTAAYFAYHMLKESYKPAMFSTMNTTLDGKTFFKSQLTTPESLDLFAMMAECVTNGMTHLIMEVSSQAYLVDRVYGLTFDVGVFLNISPDHIGPIEHPTFEDYFYHKRLLMENSRAVVINSVMDHFSFLADQVADQEHVFYGPLSDNQITTSQAFSFEAKGQLAGHYDIQLIGHFNQENAMAAGLACLRLGASLADIQKGIAKTRVPGRMEVLTMTNHAKVFVDYAHNGDSLEKLLSVVEEHQTGKLMLILGAPGNKGESRRADFGRVIHQHPNLTVILTADDPNFEDPEDISKEIASHIARPVEIISDREQAIQKAMSLCQGAKDAVIIAGKGADAYQIVKGQQVAYAGDLAIAKHYL.

Ser42 is a binding site for UDP-N-acetyl-alpha-D-muramoyl-L-alanyl-D-glutamate. 118–124 lines the ATP pocket; sequence GTKGKTT. UDP-N-acetyl-alpha-D-muramoyl-L-alanyl-D-glutamate contacts are provided by residues Gln158, 160–161, Ser187, and Arg195; that span reads TT. The residue at position 229 (Lys229) is an N6-carboxylysine. The short motif at 404–407 is the L-lysine recognition motif element; sequence DDPN.

The protein belongs to the MurCDEF family. MurE subfamily. Post-translationally, carboxylation is probably crucial for Mg(2+) binding and, consequently, for the gamma-phosphate positioning of ATP.

The protein localises to the cytoplasm. The enzyme catalyses UDP-N-acetyl-alpha-D-muramoyl-L-alanyl-D-glutamate + L-lysine + ATP = UDP-N-acetyl-alpha-D-muramoyl-L-alanyl-gamma-D-glutamyl-L-lysine + ADP + phosphate + H(+). It participates in cell wall biogenesis; peptidoglycan biosynthesis. Functionally, catalyzes the addition of L-lysine to the nucleotide precursor UDP-N-acetylmuramoyl-L-alanyl-D-glutamate (UMAG) in the biosynthesis of bacterial cell-wall peptidoglycan. In Streptococcus pyogenes serotype M3 (strain SSI-1), this protein is UDP-N-acetylmuramoyl-L-alanyl-D-glutamate--L-lysine ligase.